The following is an 880-amino-acid chain: Valine--tRNA ligase (880 aa).

The 'HIGH' region motif lies at Pro-49–His-59. Positions Lys-525–Ser-529 match the 'KMSKS' region motif. Lys-528 is an ATP binding site. Positions Leu-809–Lys-879 form a coiled coil.

This sequence belongs to the class-I aminoacyl-tRNA synthetase family. ValS type 1 subfamily. In terms of assembly, monomer.

The protein resides in the cytoplasm. The enzyme catalyses tRNA(Val) + L-valine + ATP = L-valyl-tRNA(Val) + AMP + diphosphate. Catalyzes the attachment of valine to tRNA(Val). As ValRS can inadvertently accommodate and process structurally similar amino acids such as threonine, to avoid such errors, it has a 'posttransfer' editing activity that hydrolyzes mischarged Thr-tRNA(Val) in a tRNA-dependent manner. The polypeptide is Valine--tRNA ligase (Halalkalibacterium halodurans (strain ATCC BAA-125 / DSM 18197 / FERM 7344 / JCM 9153 / C-125) (Bacillus halodurans)).